The chain runs to 266 residues: N-acetyltransferase ECO1 (266 aa).

The CCHH-type zinc finger occupies 31–55 (KKCTECQMSYIIDSPADCAEHKKYH). The N-acetyltransferase domain occupies 108-266 (TPGKTAEVKA…SGELLIPCYI (159 aa)).

Belongs to the acetyltransferase family. ECO subfamily.

The protein localises to the nucleus. In terms of biological role, probable acetyltransferase required for the establishment of sister chromatid cohesion and couple the processes of cohesion and DNA replication to ensure that only sister chromatids become paired together. In contrast to the structural cohesins, the deposition and establishment factors are required only during S phase. Acts by acetylating the cohesin complex component SMC3. In Eremothecium gossypii (strain ATCC 10895 / CBS 109.51 / FGSC 9923 / NRRL Y-1056) (Yeast), this protein is N-acetyltransferase ECO1 (ECO1).